Here is a 164-residue protein sequence, read N- to C-terminus: NADH-quinone oxidoreductase subunit B (164 aa).

Positions 38, 39, 104, and 133 each coordinate [4Fe-4S] cluster.

Belongs to the complex I 20 kDa subunit family. As to quaternary structure, NDH-1 is composed of 14 different subunits. Subunits NuoB, C, D, E, F, and G constitute the peripheral sector of the complex. It depends on [4Fe-4S] cluster as a cofactor.

The protein localises to the cell inner membrane. The enzyme catalyses a quinone + NADH + 5 H(+)(in) = a quinol + NAD(+) + 4 H(+)(out). In terms of biological role, NDH-1 shuttles electrons from NADH, via FMN and iron-sulfur (Fe-S) centers, to quinones in the respiratory chain. The immediate electron acceptor for the enzyme in this species is believed to be ubiquinone. Couples the redox reaction to proton translocation (for every two electrons transferred, four hydrogen ions are translocated across the cytoplasmic membrane), and thus conserves the redox energy in a proton gradient. This is NADH-quinone oxidoreductase subunit B from Protochlamydia amoebophila (strain UWE25).